We begin with the raw amino-acid sequence, 256 residues long: Ribosomal RNA small subunit methyltransferase A (256 aa).

S-adenosyl-L-methionine is bound by residues Asn12, Leu14, Gly39, Glu60, Asp85, and Asn103.

Belongs to the class I-like SAM-binding methyltransferase superfamily. rRNA adenine N(6)-methyltransferase family. RsmA subfamily.

It localises to the cytoplasm. The catalysed reaction is adenosine(1518)/adenosine(1519) in 16S rRNA + 4 S-adenosyl-L-methionine = N(6)-dimethyladenosine(1518)/N(6)-dimethyladenosine(1519) in 16S rRNA + 4 S-adenosyl-L-homocysteine + 4 H(+). Its function is as follows. Specifically dimethylates two adjacent adenosines (A1518 and A1519) in the loop of a conserved hairpin near the 3'-end of 16S rRNA in the 30S particle. May play a critical role in biogenesis of 30S subunits. This Legionella pneumophila (strain Lens) protein is Ribosomal RNA small subunit methyltransferase A.